Here is a 450-residue protein sequence, read N- to C-terminus: Cysteine protease ATG4C (450 aa).

Cysteine 112 serves as the catalytic Nucleophile. Catalysis depends on residues aspartate 336 and histidine 338.

This sequence belongs to the peptidase C54 family.

Its subcellular location is the cytoplasm. The enzyme catalyses [protein]-C-terminal L-amino acid-glycyl-phosphatidylethanolamide + H2O = [protein]-C-terminal L-amino acid-glycine + a 1,2-diacyl-sn-glycero-3-phosphoethanolamine. Cysteine protease that plays a key role in autophagy by mediating both proteolytic activation and delipidation of ATG8 family proteins. The protease activity is required for proteolytic activation of ATG8 family proteins: cleaves the C-terminal amino acid of ATG8 proteins to reveal a C-terminal glycine. Exposure of the glycine at the C-terminus is essential for ATG8 proteins conjugation to phosphatidylethanolamine (PE) and insertion to membranes, which is necessary for autophagy. In addition to the protease activity, also mediates delipidation of ATG8 family proteins. Catalyzes delipidation of PE-conjugated forms of ATG8 proteins during macroautophagy. The polypeptide is Cysteine protease ATG4C (Xenopus tropicalis (Western clawed frog)).